Consider the following 360-residue polypeptide: Histidinol-phosphate aminotransferase (360 aa).

At K222 the chain carries N6-(pyridoxal phosphate)lysine.

This sequence belongs to the class-II pyridoxal-phosphate-dependent aminotransferase family. Histidinol-phosphate aminotransferase subfamily. In terms of assembly, homodimer. Requires pyridoxal 5'-phosphate as cofactor.

It carries out the reaction L-histidinol phosphate + 2-oxoglutarate = 3-(imidazol-4-yl)-2-oxopropyl phosphate + L-glutamate. The protein operates within amino-acid biosynthesis; L-histidine biosynthesis; L-histidine from 5-phospho-alpha-D-ribose 1-diphosphate: step 7/9. This is Histidinol-phosphate aminotransferase from Listeria welshimeri serovar 6b (strain ATCC 35897 / DSM 20650 / CCUG 15529 / CIP 8149 / NCTC 11857 / SLCC 5334 / V8).